Reading from the N-terminus, the 274-residue chain is Anamorsin homolog (274 aa).

The N-terminal SAM-like domain stretch occupies residues 1 to 154 (MDRTRKQCSV…KKPSWKIGSS (154 aa)). The tract at residues 154–185 (SFALKKSTKGSVKVNLDDDLIDEDSLLTEEDM) is linker. [2Fe-2S] cluster is bound by residues Cys-196, Cys-205, Cys-208, and Cys-210. Residues 196 to 210 (CEVGSTRKACKNCTC) are fe-S binding site A. Positions 235, 238, 246, and 249 each coordinate [4Fe-4S] cluster. 2 consecutive short sequence motifs (cx2C motif) follow at residues 235–238 (CGSC) and 246–249 (CSTC). A fe-S binding site B region spans residues 235-249 (CGSCGLGDAFRCSTC).

It belongs to the anamorsin family. Monomer. [2Fe-2S] cluster is required as a cofactor. Requires [4Fe-4S] cluster as cofactor.

It is found in the cytoplasm. Its subcellular location is the mitochondrion intermembrane space. Component of the cytosolic iron-sulfur (Fe-S) protein assembly (CIA) machinery. Required for the maturation of extramitochondrial Fe-S proteins. Part of an electron transfer chain functioning in an early step of cytosolic Fe-S biogenesis, facilitating the de novo assembly of a [4Fe-4S] cluster on the cytosolic Fe-S scaffold complex. Electrons are transferred from NADPH via a FAD- and FMN-containing diflavin oxidoreductase. Together with the diflavin oxidoreductase, also required for the assembly of the diferric tyrosyl radical cofactor of ribonucleotide reductase (RNR), probably by providing electrons for reduction during radical cofactor maturation in the catalytic small subunit. The protein is Anamorsin homolog of Ricinus communis (Castor bean).